Here is a 646-residue protein sequence, read N- to C-terminus: Cysteine-rich receptor-like protein kinase 37 (646 aa).

The signal sequence occupies residues 1 to 26 (MGKSCVVTSSFSLLLLFLQTLKYVHA). Gnk2-homologous domains lie at 27–132 (GFIC…NHST) and 142–252 (TINP…LYPY). Residues 27–287 (GFICYGDFFN…RDEKSFQGSN (261 aa)) lie on the Extracellular side of the membrane. Residues Asn-62, Asn-129, Asn-169, and Asn-180 are each glycosylated (N-linked (GlcNAc...) asparagine). A helical membrane pass occupies residues 288–308 (IAIIVVPSVINLIIFVVLIFS). Residues 309–646 (WKRKQSHTII…LTRPSLSLGH (338 aa)) lie on the Cytoplasmic side of the membrane. The 282-residue stretch at 345-626 (FSLENKLGQG…LFWLERHATI (282 aa)) folds into the Protein kinase domain. ATP contacts are provided by residues 351-359 (LGQGGFGSV) and Lys-373. Residue Tyr-418 is modified to Phosphotyrosine. The active-site Proton acceptor is Asp-470. A Phosphoserine modification is found at Ser-474. Thr-510 is modified (phosphothreonine). Tyr-518 bears the Phosphotyrosine mark.

This sequence belongs to the protein kinase superfamily. Ser/Thr protein kinase family. CRK subfamily.

The protein localises to the membrane. It carries out the reaction L-seryl-[protein] + ATP = O-phospho-L-seryl-[protein] + ADP + H(+). The catalysed reaction is L-threonyl-[protein] + ATP = O-phospho-L-threonyl-[protein] + ADP + H(+). This chain is Cysteine-rich receptor-like protein kinase 37 (CRK37), found in Arabidopsis thaliana (Mouse-ear cress).